We begin with the raw amino-acid sequence, 394 residues long: Cystathionine gamma-lyase (394 aa).

The disordered stretch occupies residues 37-56; sequence KQSSPANPIGTYEYSRSQNP. 3 residues coordinate substrate: Arg-52, Tyr-104, and Arg-109. Lys-204 is subject to N6-(pyridoxal phosphate)lysine. Position 334 (Glu-334) interacts with substrate. Phosphoserine is present on Ser-362.

This sequence belongs to the trans-sulfuration enzymes family. In terms of assembly, homotetramer. The cofactor is pyridoxal 5'-phosphate.

It is found in the cytoplasm. It catalyses the reaction L,L-cystathionine + H2O = 2-oxobutanoate + L-cysteine + NH4(+). The protein operates within amino-acid biosynthesis; L-cysteine biosynthesis; L-cysteine from L-homocysteine and L-serine: step 2/2. Functionally, catalyzes the production of cysteine from cystathionine in the reverse transsulfuration pathway for the biosynthesis of sulfur-containing amino acids cysteine and methionine. In this pathway, homocysteine sulfur is converted to cysteine sulfur. Also has cystathionine beta-lyase and cystathionine gamma-synthase activities in vitro. Cystathionine beta-lyase may be physiological, while cystathionine gamma-synthase activity is not, as the required substrate O-succinyl-L-homoserine(OSH) does not occur naturally in S.cerevisiae. The protein is Cystathionine gamma-lyase of Saccharomyces cerevisiae (strain ATCC 204508 / S288c) (Baker's yeast).